Consider the following 293-residue polypeptide: Urease accessory protein UreD (293 aa).

Belongs to the UreD family. In terms of assembly, ureD, UreF and UreG form a complex that acts as a GTP-hydrolysis-dependent molecular chaperone, activating the urease apoprotein by helping to assemble the nickel containing metallocenter of UreC. The UreE protein probably delivers the nickel.

It localises to the cytoplasm. Required for maturation of urease via the functional incorporation of the urease nickel metallocenter. This Arthrobacter sp. (strain FB24) protein is Urease accessory protein UreD.